The following is a 134-amino-acid chain: Orexigenic neuropeptide QRFP (134 aa).

Positions 1–18 are cleaved as a signal peptide; the sequence is MRSPYSLPYLLFLPLGAC. Positions 19–88 are excised as a propeptide; the sequence is FPVLDTEEPV…RAGFQLRLGR (70 aa). Residue Phe131 is modified to Phenylalanine amide.

Belongs to the RFamide neuropeptide family. In terms of assembly, ligand for the G-protein coupled receptor QRFPR/GPR103. As to expression, expressed in the hypothalamus.

The protein resides in the secreted. Functionally, stimulates feeding behavior, metabolic rate and locomotor activity and increases blood pressure. May have orexigenic activity. May promote aldosterone secretion by the adrenal gland. In Bos taurus (Bovine), this protein is Orexigenic neuropeptide QRFP.